The primary structure comprises 160 residues: Eosinophil cationic protein (160 aa).

An N-terminal signal peptide occupies residues 1–27; sequence MVPKLFTSQICLLLLLGLMGVEGSLHA. Residues 28–72 form a required for nearly all of the bactericidal activities; partially involved in LPS-binding region; sequence RPPQFTKAQWFAIQHINVNPPRCTIAMRVINNYQRRCKNQNTFLR. Histidine 42 (proton acceptor) is an active-site residue. Cystine bridges form between cysteine 50–cysteine 110, cysteine 64–cysteine 123, cysteine 82–cysteine 138, and cysteine 89–cysteine 98. A 3'-nitrotyrosine modification is found at tyrosine 60. 65–69 serves as a coordination point for substrate; the sequence is KNQNT. N-linked (GlcNAc...) asparagine glycosylation is found at asparagine 92 and asparagine 119. The active-site Proton donor is the histidine 155.

The protein belongs to the pancreatic ribonuclease family. As to quaternary structure, interacts with bacterial lipopolysaccharide (LPS) and lipoteichoic acid (LTA). In vitro interacts with phospholipid bilayers.

It is found in the secreted. Its function is as follows. Cytotoxin and helminthotoxin with low-efficiency ribonuclease activity. Possesses a wide variety of biological activities. Exhibits antibacterial activity. In Macaca fascicularis (Crab-eating macaque), this protein is Eosinophil cationic protein (RNASE3).